Here is a 584-residue protein sequence, read N- to C-terminus: HERV-H_2q24.3 provirus ancestral Env polyprotein (584 aa).

The N-terminal stretch at 1-35 (MIFAGKAPSNTSTLMKFYSLLLYSLLFSFPFLCHP) is a signal peptide. Residues 36–523 (LPLPSYLHHT…WALSNWMSWV (488 aa)) are Extracellular-facing. N-linked (GlcNAc...) asparagine glycosylation occurs at Asn47. The short motif at 64–67 (CWLC) is the CXXC element. N-linked (GlcNAc...) asparagine glycosylation is found at Asn199, Asn222, Asn265, Asn283, Asn352, and Asn370. Residues 388 to 408 (VIPLIPLMVGLGLSASTVALG) are fusion peptide. The CKS-17 signature appears at 454-470 (LQNRRGLDLLTAEKGGL). A disulfide bridge connects residues Cys471 and Cys478. The CX6CC motif lies at 471–479 (CIFLNEECC). Asn483 is a glycosylation site (N-linked (GlcNAc...) asparagine). Residues 524 to 544 (LPIVSPLIPIFLLLLFGPCIF) form a helical membrane-spanning segment. Residues 545-584 (RLVSQFIQNRIQAITNHSIRQMFLLTSPQYHPLPQDLPSA) are Cytoplasmic-facing.

It belongs to the gamma type-C retroviral envelope protein family. HERV class-I H env subfamily. As to quaternary structure, the surface (SU) and transmembrane (TM) proteins form a heterodimer. SU and TM are attached by noncovalent interactions or by a labile interchain disulfide bond. In terms of processing, specific enzymatic cleavages in vivo yield the mature SU and TM proteins. Post-translationally, the CXXC motif is highly conserved across a broad range of retroviral envelope proteins. It is thought to participate in the formation of a labile disulfide bond possibly with the CX6CC motif present in the transmembrane protein. Isomerization of the intersubunit disulfide bond to an SU intrachain disulfide bond is thought to occur upon receptor recognition in order to allow membrane fusion. As to expression, low expression in skin and testis. No expression in several cell lines.

It localises to the virion. Its subcellular location is the cell membrane. Its function is as follows. Retroviral envelope proteins mediate receptor recognition and membrane fusion during early infection. Endogenous envelope proteins may have kept, lost or modified their original function during evolution. This endogenous envelope protein has lost its original fusogenic properties but has immunosuppressive properties in vivo. In terms of biological role, SU mediates receptor recognition. TM anchors the envelope heterodimer to the viral membrane through one transmembrane domain. The other hydrophobic domain, called fusion peptide, mediates fusion of the viral membrane with the target cell membrane. In Homo sapiens (Human), this protein is HERV-H_2q24.3 provirus ancestral Env polyprotein.